The following is a 383-amino-acid chain: Transposase InsI for insertion sequence element IS30C (383 aa).

The 167-residue stretch at 213 to 379 (VNGTPIHERS…TPKEIIERGV (167 aa)) folds into the Integrase catalytic domain.

It belongs to the transposase IS30 family.

Required for the transposition of the insertion element. This chain is Transposase InsI for insertion sequence element IS30C (insI3), found in Escherichia coli (strain K12).